The sequence spans 46 residues: Large ribosomal subunit protein bL36 (46 aa).

This sequence belongs to the bacterial ribosomal protein bL36 family.

This chain is Large ribosomal subunit protein bL36, found in Klebsiella pneumoniae (strain 342).